A 410-amino-acid chain; its full sequence is Serine hydroxymethyltransferase (410 aa).

(6S)-5,6,7,8-tetrahydrofolate-binding positions include leucine 116 and 120 to 122 (GHL). At lysine 225 the chain carries N6-(pyridoxal phosphate)lysine. (6S)-5,6,7,8-tetrahydrofolate is bound at residue 349-351 (SPF).

Belongs to the SHMT family. In terms of assembly, homodimer. Pyridoxal 5'-phosphate is required as a cofactor.

Its subcellular location is the cytoplasm. It catalyses the reaction (6R)-5,10-methylene-5,6,7,8-tetrahydrofolate + glycine + H2O = (6S)-5,6,7,8-tetrahydrofolate + L-serine. It functions in the pathway one-carbon metabolism; tetrahydrofolate interconversion. The protein operates within amino-acid biosynthesis; glycine biosynthesis; glycine from L-serine: step 1/1. Its function is as follows. Catalyzes the reversible interconversion of serine and glycine with tetrahydrofolate (THF) serving as the one-carbon carrier. This reaction serves as the major source of one-carbon groups required for the biosynthesis of purines, thymidylate, methionine, and other important biomolecules. Also exhibits THF-independent aldolase activity toward beta-hydroxyamino acids, producing glycine and aldehydes, via a retro-aldol mechanism. This Leuconostoc citreum (strain KM20) protein is Serine hydroxymethyltransferase.